Consider the following 334-residue polypeptide: Nucleoid-associated protein YejK (334 aa).

It belongs to the YejK family.

The protein localises to the cytoplasm. Its subcellular location is the nucleoid. The chain is Nucleoid-associated protein YejK from Escherichia fergusonii (strain ATCC 35469 / DSM 13698 / CCUG 18766 / IAM 14443 / JCM 21226 / LMG 7866 / NBRC 102419 / NCTC 12128 / CDC 0568-73).